The following is a 444-amino-acid chain: Protein EMP46 (444 aa).

An N-terminal signal peptide occupies residues 1–46; it reads MTTRKTASSLQLLGKITGTKAGTKQKKMNFINGLIWLYMCVWMVHG. The Lumenal segment spans residues 47 to 408; that stretch reads KVTQKDELKW…YGKQTKGHDE (362 aa). Residues 52 to 269 enclose the L-type lectin-like domain; that stretch reads DELKWNKGYS…EILKMKLYDG (218 aa). Tyrosine 177 contributes to the K(+) binding site. Residues cysteine 196 and cysteine 230 are joined by a disulfide bond. The chain crosses the membrane as a helical span at residues 409–429; that stretch reads IFSKISVWLALLIFIMITLAY. The interval 429–432 is mediates the interactions with COPI and COPII coat complexes; the sequence is YYMF. The Cytoplasmic segment spans residues 430–444; it reads YMFRINQDIKKVKLL. A Di-lysine motif motif is present at residues 440-444; that stretch reads KVKLL.

The protein belongs to the EMP46/EMP47 family. As to quaternary structure, interacts with EMP47 in the endoplasmic reticulum membrane in order to be transported to the Golgi apparatus. Interacts with the coatomer proteins COP1, SEC21 and SEC23.

The protein resides in the golgi apparatus membrane. It localises to the endoplasmic reticulum membrane. In terms of biological role, involved in the secretion of glycoproteins and in nucleus architecture and gene silencing. This chain is Protein EMP46 (EMP46), found in Saccharomyces cerevisiae (strain ATCC 204508 / S288c) (Baker's yeast).